A 646-amino-acid polypeptide reads, in one-letter code: Chaperone protein DnaK (646 aa).

Thr-198 carries the phosphothreonine; by autocatalysis modification. The tract at residues 603 to 646 is disordered; it reads EQAQQAGGAEGFDPNAFQGGDAGQQKADDGVVDAEFTEVKDDKK. Residues 618–627 show a composition bias toward low complexity; it reads AFQGGDAGQQ.

The protein belongs to the heat shock protein 70 family.

In terms of biological role, acts as a chaperone. The protein is Chaperone protein DnaK of Acinetobacter baumannii (strain AB307-0294).